A 1813-amino-acid polypeptide reads, in one-letter code: Sucrase-isomaltase, intestinal (1813 aa).

Residues 1 to 12 (MARKKSSGLKIT) are Cytoplasmic-facing. Serine 7 bears the Phosphoserine; by PKA mark. A helical; Signal-anchor for type II membrane protein membrane pass occupies residues 13 to 32 (LIVLLAIVTIIAIALVAILP). The Lumenal segment spans residues 33 to 1813 (TKTPAVELVS…LDEPIEISWT (1781 aa)). Positions 46–95 (GKCPSAENDRLDEKINCIPDQFPTQALCAMQGCCWNPRNESPTPWCSFAN) constitute a P-type 1 domain. Cystine bridges form between cysteine 48–cysteine 79, cysteine 62–cysteine 78, and cysteine 73–cysteine 91. The segment at 95-991 (NNHGYEFEKI…DLELNTATAR (897 aa)) is isomaltase. An N-linked (GlcNAc...) asparagine glycan is attached at asparagine 127. Substrate-binding residues include aspartate 250 and aspartate 374. At tyrosine 377 the chain carries Sulfotyrosine. N-linked (GlcNAc...) asparagine glycosylation occurs at asparagine 388. The Nucleophile; for isomaltase activity role is filled by aspartate 491. A disulfide bond links cysteine 506 and cysteine 531. A substrate-binding site is contributed by arginine 574. Aspartate 590 acts as the For isomaltase activity in catalysis. A disulfide bond links cysteine 621 and cysteine 632. Substrate is bound at residue histidine 648. N-linked (GlcNAc...) asparagine glycans are attached at residues asparagine 669, asparagine 791, asparagine 896, and asparagine 911. The P-type 2 domain maps to 917-962 (NQVSLDSEKIDCFPDNNPENKQNCEERGCLWEPNSAAEGPRCYFPK). Residues 992–1813 (IKMPSNPISV…LDEPIEISWT (822 aa)) are sucrase. 2 N-linked (GlcNAc...) asparagine glycosylation sites follow: asparagine 1221 and asparagine 1289. Tyrosine 1294 carries the sulfotyrosine modification. 2 N-linked (GlcNAc...) asparagine glycosylation sites follow: asparagine 1326 and asparagine 1340. Residues tyrosine 1368 and tyrosine 1371 each carry the sulfotyrosine modification. The Nucleophile; for sucrase activity role is filled by aspartate 1380. Glutamate 1383 (for sucrase activity) is an active-site residue. Residue asparagine 1432 is glycosylated (N-linked (GlcNAc...) asparagine). Aspartate 1486 functions as the Proton donor; for sucrase activity in the catalytic mechanism. N-linked (GlcNAc...) asparagine glycans are attached at residues asparagine 1521, asparagine 1545, asparagine 1558, asparagine 1703, and asparagine 1772.

This sequence belongs to the glycosyl hydrolase 31 family. The resulting sucrase and isomaltase subunits stay associated with one another in a complex by non-covalent linkages. The precursor is proteolytically cleaved when exposed to pancreatic proteases in the intestinal lumen. In terms of processing, sulfated.

The protein resides in the apical cell membrane. It catalyses the reaction Hydrolysis of sucrose and maltose by an alpha-D-glucosidase-type action.. The catalysed reaction is Hydrolysis of (1-&gt;6)-alpha-D-glucosidic linkages in some oligosaccharides produced from starch and glycogen by alpha-amylase, and in isomaltose.. Plays an important role in the final stage of carbohydrate digestion. Isomaltase activity is specific for both alpha-1,4- and alpha-1,6-oligosaccharides. This Suncus murinus (Asian house shrew) protein is Sucrase-isomaltase, intestinal (SI).